The chain runs to 923 residues: Periodic tryptophan protein 2 (923 aa).

WD repeat units follow at residues 12-52 (GTVY…TFEY), 53-93 (EHRK…LHHF), 94-132 (NFKE…KDRQ), 144-183 (GHFQ…KNLA), and 189-228 (GHRD…SDDD). Phosphoserine occurs at positions 225 and 232. WD repeat units follow at residues 258-297 (ANQA…LIQQ), 300-340 (MGQN…YILK), 343-382 (GHFD…CLAT), 385-424 (EHTS…NFRT), 428-470 (TERI…DALS), 471-510 (GHEG…QQVE), 513-552 (EVYS…QVGN), and 575-614 (ERSK…LLKR). Ser651 and Ser664 each carry phosphoserine. A disordered region spans residues 653–674 (LEDRIDNSLPGSQRGGDLSTRK). Residues 676-714 (RPEVRVTSVQFSPTANAFAAASTEGLLIYSTNDTILFDP) form a WD 14 repeat. Composition is skewed to acidic residues over residues 869-893 (KDDA…DEEG) and 911-923 (DSSD…KELP). The disordered stretch occupies residues 869-923 (KDDADEDNEENEENDVVMESDDEEGWIGFNGKDNKLPLSNENDSSDEEENEKELP). A phosphoserine mark is found at Ser912 and Ser913.

This sequence belongs to the WD repeat PWP2 family. In terms of assembly, interacts with snoRNA U3. Interacts with MPP10. Component of the ribosomal small subunit (SSU) processome composed of at least 40 protein subunits and snoRNA U3.

It localises to the nucleus. The protein localises to the nucleolus. Functionally, required for bud-site selection and cell separation. Also involved in nucleolar processing of pre-18S ribosomal RNA. This chain is Periodic tryptophan protein 2 (PWP2), found in Saccharomyces cerevisiae (strain ATCC 204508 / S288c) (Baker's yeast).